A 276-amino-acid chain; its full sequence is Large ribosomal subunit protein uL2 (276 aa).

Disordered regions lie at residues 1-20 and 219-276; these read MGIK…TTND and TVRG…RRKK. The span at 7–20 shows a compositional bias: polar residues; it reads NPTTNGRRNMTTND.

It belongs to the universal ribosomal protein uL2 family. Part of the 50S ribosomal subunit. Forms a bridge to the 30S subunit in the 70S ribosome.

Its function is as follows. One of the primary rRNA binding proteins. Required for association of the 30S and 50S subunits to form the 70S ribosome, for tRNA binding and peptide bond formation. It has been suggested to have peptidyltransferase activity; this is somewhat controversial. Makes several contacts with the 16S rRNA in the 70S ribosome. The sequence is that of Large ribosomal subunit protein uL2 from Bacillus cereus (strain Q1).